Consider the following 289-residue polypeptide: MLRDLFVKKKKYAAIPSEQVRKDVPDGVMTKCPECKKIMYTKELLKNLKVCVNCGYHHPMNAWERLDSILDEGSFREYDKEMVSLNPLEFPGYEEKLESDRKKTELNEAVVTGEGTIDDMLVVVAVMDSRFRMGSMGSVVGEKIARAVEKAYDLQVPFIIFTASGGARMQEGILSLMQMAKTSVALKKHSNAGGLFISVMTHPTTGGVSASFASLGDYNLAEPGALIGFAGRRVIEQTVREKLPEDFQTAEFLLDHGQLDAVVHRDDMRESLRKILEVHQGGEMAVWQS.

One can recognise a CoA carboxyltransferase N-terminal domain in the interval 28 to 289 (VMTKCPECKK…QGGEMAVWQS (262 aa)). 4 residues coordinate Zn(2+): Cys32, Cys35, Cys51, and Cys54. The C4-type zinc-finger motif lies at 32–54 (CPECKKIMYTKELLKNLKVCVNC).

This sequence belongs to the AccD/PCCB family. Acetyl-CoA carboxylase is a heterohexamer composed of biotin carboxyl carrier protein (AccB), biotin carboxylase (AccC) and two subunits each of ACCase subunit alpha (AccA) and ACCase subunit beta (AccD). It depends on Zn(2+) as a cofactor.

It is found in the cytoplasm. It catalyses the reaction N(6)-carboxybiotinyl-L-lysyl-[protein] + acetyl-CoA = N(6)-biotinyl-L-lysyl-[protein] + malonyl-CoA. Its pathway is lipid metabolism; malonyl-CoA biosynthesis; malonyl-CoA from acetyl-CoA: step 1/1. In terms of biological role, component of the acetyl coenzyme A carboxylase (ACC) complex. Biotin carboxylase (BC) catalyzes the carboxylation of biotin on its carrier protein (BCCP) and then the CO(2) group is transferred by the transcarboxylase to acetyl-CoA to form malonyl-CoA. The protein is Acetyl-coenzyme A carboxylase carboxyl transferase subunit beta of Bacillus cereus (strain ATCC 14579 / DSM 31 / CCUG 7414 / JCM 2152 / NBRC 15305 / NCIMB 9373 / NCTC 2599 / NRRL B-3711).